The sequence spans 728 residues: Probable LRR receptor-like serine/threonine-protein kinase At1g14390 (728 aa).

A signal peptide spans 1-27 (MHSSSKSQAFSLTFLLFLFLLPSVSES). The Extracellular segment spans residues 28–356 (QLISSESRTL…EEDTGIELGL (329 aa)). Asn55 and Asn85 each carry an N-linked (GlcNAc...) asparagine glycan. LRR repeat units follow at residues 74–96 (NGHVTELTVTGNRTVKLPGRFSS), 106–130 (LSNLKTLSLVSLGISGPLPSQIIRL), 131–155 (SSSLQSLNLSSNFISGNIPKEISSL), 157–178 (NLRSLVLANNLFNGSVPDLRGL), 179–202 (SNLQELNLGGNKLGPEVVPSLASN), 204–224 (ITISLKNNSFGSKIPEQIKKL), 225–248 (NKLQSLDLSSNKFTGSIPRFLLSL), 249–272 (PSLQNLSLAQNLLSGSLPNSSLCN), and 274–295 (KLRILDVSRNLLTGKLPSCFSS). N-linked (GlcNAc...) asparagine glycans are attached at residues Asn138 and Asn169. The N-linked (GlcNAc...) asparagine glycan is linked to Asn210. N-linked (GlcNAc...) asparagine glycosylation is found at Asn253 and Asn267. The chain crosses the membrane as a helical span at residues 357-377 (VIGIIIGVILVSAVLAGLVLV). Topologically, residues 378–728 (RMRKSRSKEE…ENLGLGGSEL (351 aa)) are cytoplasmic. In terms of domain architecture, Protein kinase spans 421–709 (TMRSAVIGLS…DVVWNLQYTI (289 aa)).

The protein belongs to the protein kinase superfamily. Ser/Thr protein kinase family.

The protein localises to the membrane. The catalysed reaction is L-seryl-[protein] + ATP = O-phospho-L-seryl-[protein] + ADP + H(+). It catalyses the reaction L-threonyl-[protein] + ATP = O-phospho-L-threonyl-[protein] + ADP + H(+). The chain is Probable LRR receptor-like serine/threonine-protein kinase At1g14390 from Arabidopsis thaliana (Mouse-ear cress).